The sequence spans 281 residues: Elongation factor Ts (281 aa).

The tract at residues 80 to 83 (TDFV) is involved in Mg(2+) ion dislocation from EF-Tu.

Belongs to the EF-Ts family.

The protein resides in the cytoplasm. Associates with the EF-Tu.GDP complex and induces the exchange of GDP to GTP. It remains bound to the aminoacyl-tRNA.EF-Tu.GTP complex up to the GTP hydrolysis stage on the ribosome. The protein is Elongation factor Ts of Aliivibrio fischeri (strain MJ11) (Vibrio fischeri).